We begin with the raw amino-acid sequence, 83 residues long: Apolipoprotein C-I, basic form (83 aa).

A signal peptide spans 1 to 26; it reads MRLFLSLPVLVVVLSMVLEGPAPAQG.

This sequence belongs to the apolipoprotein C1 family.

It is found in the secreted. Its function is as follows. Inhibitor of lipoprotein binding to the low density lipoprotein (LDL) receptor, LDL receptor-related protein, and very low density lipoprotein (VLDL) receptor. Associates with high density lipoproteins (HDL) and the triacylglycerol-rich lipoproteins in the plasma and makes up about 10% of the protein of the VLDL and 2% of that of HDL. Appears to interfere directly with fatty acid uptake and is also the major plasma inhibitor of cholesteryl ester transfer protein (CETP). Binds free fatty acids and reduces their intracellular esterification. Modulates the interaction of APOE with beta-migrating VLDL and inhibits binding of beta-VLDL to the LDL receptor-related protein. In Colobus guereza (Mantled guereza), this protein is Apolipoprotein C-I, basic form (APOC1B).